Reading from the N-terminus, the 38-residue chain is Spheniscin-2 (38 aa).

3 disulfide bridges follow: C5–C33, C12–C27, and C17–C34.

As to quaternary structure, monomer. Secreted into the stomach cavity.

It localises to the secreted. Its function is as follows. Has antifungal activity and antibacterial activity against Gram-positive and Gram-negative bacteria. Involved in the process of food preservation in the stomach during the incubation fast. May also be present during infection. The sequence is that of Spheniscin-2 from Aptenodytes patagonicus (King penguin).